The primary structure comprises 129 residues: LSLSGTAADCLSGWSSYEGHCYKPFNELKNWADAEKFCTEQHAGGHLVSFQSSEEADFVVKLAFQTFDHSIFWMGLSNVWNQCNWQWSNAAMLRYKAWAEESYCVYFKSTNNKWRSRSCRMMANFVCEF.

A signal peptide spans 1-8 (LSLSGTAA). 3 cysteine pairs are disulfide-bonded: cysteine 10–cysteine 21, cysteine 38–cysteine 127, and cysteine 104–cysteine 119. A C-type lectin domain is found at 17–128 (YEGHCYKPFN…CRMMANFVCE (112 aa)).

This sequence belongs to the snaclec family. In terms of assembly, heterodimer of subunits A and B3; disulfide-linked. Expressed by the venom gland.

Its subcellular location is the secreted. Its function is as follows. Anticoagulant protein which binds to the gamma-carboxyglutamic acid-domain regions of factors IX (F9) and factor X (F10) in the presence of calcium with a 1 to 1 stoichiometry. The protein is Snaclec coagulation factor IX/factor X-binding protein subunit B3 of Trimeresurus stejnegeri (Chinese green tree viper).